We begin with the raw amino-acid sequence, 238 residues long: Enolase-phosphatase E1 (238 aa).

Belongs to the HAD-like hydrolase superfamily. MasA/MtnC family. In terms of assembly, monomer. The cofactor is Mg(2+).

It carries out the reaction 5-methylsulfanyl-2,3-dioxopentyl phosphate + H2O = 1,2-dihydroxy-5-(methylsulfanyl)pent-1-en-3-one + phosphate. Its pathway is amino-acid biosynthesis; L-methionine biosynthesis via salvage pathway; L-methionine from S-methyl-5-thio-alpha-D-ribose 1-phosphate: step 3/6. The protein operates within amino-acid biosynthesis; L-methionine biosynthesis via salvage pathway; L-methionine from S-methyl-5-thio-alpha-D-ribose 1-phosphate: step 4/6. In terms of biological role, bifunctional enzyme that catalyzes the enolization of 2,3-diketo-5-methylthiopentyl-1-phosphate (DK-MTP-1-P) into the intermediate 2-hydroxy-3-keto-5-methylthiopentenyl-1-phosphate (HK-MTPenyl-1-P), which is then dephosphorylated to form the acireductone 1,2-dihydroxy-3-keto-5-methylthiopentene (DHK-MTPene). This Synechococcus elongatus (strain ATCC 33912 / PCC 7942 / FACHB-805) (Anacystis nidulans R2) protein is Enolase-phosphatase E1.